Reading from the N-terminus, the 184-residue chain is Transcription termination/antitermination protein NusG (184 aa).

The protein belongs to the NusG family.

Participates in transcription elongation, termination and antitermination. The sequence is that of Transcription termination/antitermination protein NusG from Borreliella burgdorferi (strain ATCC 35210 / DSM 4680 / CIP 102532 / B31) (Borrelia burgdorferi).